The sequence spans 351 residues: AT-hook motif nuclear-localized protein 10 (351 aa).

The segment at 1–151 (MSGSETGLMA…RPPGSSSKRL (151 aa)) is disordered. Low complexity predominate over residues 23–37 (HQQQQHSQAQPQQSQ). The segment covering 60–77 (SPPQQYQPNSAGENSVLN) has biased composition (polar residues). The short motif at 97 to 105 (KKRRGRPRK) is the Bipartite nuclear localization signal element. 2 consecutive DNA-binding regions (a.T hook) follow at residues 97–109 (KKRR…YGPD) and 138–149 (KKRGRPPGSSSK). Residues 159–301 (TGIGFTPHVL…QMGLSSPVLP (143 aa)) form the PPC domain. Composition is skewed to polar residues over residues 310–325 (MTPS…SESS) and 334–351 (IHQS…MPWK). Residues 310–351 (MTPSSPQSRGTMSESSCGGGHGSPIHQSTGGPYNNTINMPWK) are disordered.

The protein resides in the nucleus. Transcription factor that specifically binds AT-rich DNA sequences related to the nuclear matrix attachment regions (MARs). The sequence is that of AT-hook motif nuclear-localized protein 10 from Arabidopsis thaliana (Mouse-ear cress).